The sequence spans 402 residues: WAT1-related protein At5g07050 (402 aa).

Transmembrane regions (helical) follow at residues 20–40, 48–68, 74–94, 109–129, 149–169, 196–216, 229–249, 266–286, 293–313, and 318–338; these read FAMI…KISL, VLVV…AFFF, PKIT…GPVI, TFSC…AVLF, VVTV…VELF, FLKG…LFVL, LSLT…VTFV, LAAA…QGIV, VFAT…GSFV, and IFLG…AVLW. EamA domains follow at residues 29 to 159 and 208 to 337; these read YAGM…MLMT and LAWA…YAVL.

It belongs to the drug/metabolite transporter (DMT) superfamily. Plant drug/metabolite exporter (P-DME) (TC 2.A.7.4) family.

The protein resides in the membrane. The chain is WAT1-related protein At5g07050 from Arabidopsis thaliana (Mouse-ear cress).